A 440-amino-acid chain; its full sequence is Aclacinomycin-T 2-deoxy-L-fucose transferase (440 aa).

The catalysed reaction is dTDP-2-deoxy-beta-L-fucose + aclacinomycin T = aclacinomycin S + dTDP + H(+). Involved in the biosynthesis of the trisaccharide moiety characteristic of the antitumor drug aclacinomycins. In the first reaction, AknK catalyzes the transfer of 2-deoxy-beta-L-fucose from the activated donor dTDP-2-deoxy-beta-L-fucose to the mono-glycosylated aclacinomycin T (rhodosaminyl aklavinone), forming the di-glycosylated aclacinomycin S (L-2-deoxyfucosyl-L-rhodosaminyl aklavinone). It can also catalyze the addition of an alternate dTDP-L-sugar, dTDP-L-daunosamine, to aclacinomycin T and the addition of 2-deoxy-beta-L-fucose to the mono-glycosylated aglycones (monoglycosylated anthracyclines) such as daunomycin (daunorubicin), adriamycin (doxorubicin) and idarubicin. In vitro, AknK also catalyzes the addition of a second L-2-deoxyfucosyl moiety from dTDP-2-deoxy-beta-L-fucose, albeit with reduced activity, to the natural disaccharide chain of aclacinomycin S to produce L-deoxyfucosyl-L-deoxyfucosyl-L-rhodosaminyl aklavinone (2-deoxy-alpha-D-fucosyl-aclacinomycin S), a variant of the natural aclacinomycin A. The polypeptide is Aclacinomycin-T 2-deoxy-L-fucose transferase (Streptomyces galilaeus).